The primary structure comprises 1336 residues: Lysine-specific demethylase 2B (1336 aa).

Residues 1–25 (MAGPQMGGSAEDHPPRKRHAAEKQK) are disordered. A compositionally biased stretch (basic residues) spans 15–25 (PRKRHAAEKQK). Ser-57 bears the Phosphoserine mark. Positions 178–346 (FSHTKLEHLV…MQLRIYEIED (169 aa)) constitute a JmjC domain. Residue Thr-239 coordinates substrate. Residues His-242 and Asp-244 each contribute to the Fe cation site. Lys-259 contributes to the substrate binding site. His-314 is a binding site for Fe cation. The segment covering 410–430 (MEEEACDQQPQEEEEKDEEGE) has biased composition (acidic residues). The tract at residues 410–465 (MEEEACDQQPQEEEEKDEEGEGRDRAPKPPTDGSTSPTSTPSEDQEALGKKPKAPA) is disordered. Positions 440-451 (TDGSTSPTSTPS) are enriched in low complexity. Ser-474 and Ser-477 each carry phosphoserine. Thr-493 bears the Phosphothreonine mark. Ser-497 carries the phosphoserine modification. The CXXC-type zinc-finger motif lies at 606–652 (ARRRRTRCRKCEACLRTECGECHFCKDMKKFGGPGRMKQSCIMRQCI). Cys-613, Cys-616, Cys-619, Cys-624, Cys-627, Cys-630, Cys-646, Cys-651, Cys-662, Cys-665, Cys-688, Cys-691, His-696, Cys-699, Cys-719, and Cys-722 together coordinate Zn(2+). Residues 659 to 725 (TAVCLVCGEA…CWECPKCNHA (67 aa)) form a PHD-type zinc finger. Disordered regions lie at residues 727–843 (KTGK…SLSP) and 855–1034 (QLKP…SPPK). The segment covering 749–799 (KEQKMNRDNKEGQEPAKRRSECEEAPRRRSDEHSKKVPPDGLLRRKSDDVH) has biased composition (basic and acidic residues). Over residues 819 to 843 (SSLQTSPGSSSHLSPRPPLGSSLSP) the composition is skewed to low complexity. Glycyl lysine isopeptide (Lys-Gly) (interchain with G-Cter in SUMO2) cross-links involve residues Lys-857 and Lys-890. Residues 902–911 (PKTRESDHSR) are compositionally biased toward basic and acidic residues. Residues 932-941 (KVKMRRKRRL) are compositionally biased toward basic residues. Over residues 942 to 960 (PNKELSRELSKELNHEIQR) the composition is skewed to basic and acidic residues. A coiled-coil region spans residues 943–971 (NKELSRELSKELNHEIQRTENSLANENQQ). Ser-951 is modified (phosphoserine). Polar residues predominate over residues 961–971 (TENSLANENQQ). Phosphoserine is present on residues Ser-975, Ser-979, Ser-1018, and Ser-1031. A compositionally biased stretch (low complexity) spans 1014 to 1024 (PSLRSPPRVIS). The region spanning 1059–1105 (DGAAHVMHREVWMAVFSYLSHQDLCVCMRVCRTWNRWCCDKRLWTRI) is the F-box domain. LRR repeat units lie at residues 1093-1120 (NRWC…MLSG), 1133-1154 (WTNI…LRDL), 1156-1182 (LSGC…DVQW), 1222-1247 (GLDI…HLSY), 1248-1277 (CNHV…NLSD), 1278-1302 (CNKV…DLRY), and 1303-1336 (CKQV…QKLS).

It belongs to the JHDM1 histone demethylase family. In terms of assembly, interacts with SKP1, forming heterodimers. The heterodimeric KDM2B-SKP1 complex interacts with the PCGF1-BCORL1 heterodimeric complex to form a homotetrameric polycomb repression complex 1 (PRC1.1). Directly interacts with CUL1. The SKP1-KDM2B complex interacts with UBB. Fe(2+) serves as cofactor.

The protein resides in the nucleus. It localises to the nucleolus. Its subcellular location is the chromosome. The enzyme catalyses N(6),N(6)-dimethyl-L-lysyl(36)-[histone H3] + 2 2-oxoglutarate + 2 O2 = L-lysyl(36)-[histone H3] + 2 formaldehyde + 2 succinate + 2 CO2. Its activity is regulated as follows. Histone demethylase activity is inhibited by fumarate. Histone demethylase that demethylates 'Lys-4' and 'Lys-36' of histone H3, thereby playing a central role in histone code. Preferentially demethylates trimethylated H3 'Lys-4' and dimethylated H3 'Lys-36' residue while it has weak or no activity for mono- and tri-methylated H3 'Lys-36'. Preferentially binds the transcribed region of ribosomal RNA and represses the transcription of ribosomal RNA genes which inhibits cell growth and proliferation. May also serve as a substrate-recognition component of the SCF (SKP1-CUL1-F-box protein)-type E3 ubiquitin ligase complex. The sequence is that of Lysine-specific demethylase 2B (KDM2B) from Homo sapiens (Human).